Consider the following 129-residue polypeptide: Short-chain dehydrogenase/reductase homolog YusR (129 aa).

This sequence belongs to the short-chain dehydrogenases/reductases (SDR) family.

The protein is Short-chain dehydrogenase/reductase homolog YusR (yusR) of Bacillus subtilis (strain 168).